A 64-amino-acid chain; its full sequence is Large ribosomal subunit protein eL37 (64 aa).

Residues Cys20, Cys23, Cys35, and Cys38 each coordinate Zn(2+). The C4-type zinc finger occupies 20-38 (CRRCGRRSFHVRKKVCAAC).

It belongs to the eukaryotic ribosomal protein eL37 family. Zn(2+) serves as cofactor.

In terms of biological role, binds to the 23S rRNA. In Methanococcus maripaludis (strain C5 / ATCC BAA-1333), this protein is Large ribosomal subunit protein eL37.